Reading from the N-terminus, the 261-residue chain is Probable cyclic nucleotide phosphodiesterase PSM_A2567 (261 aa).

Residues Asp-22, His-24, Asp-62, Asn-94, His-160, His-198, and His-200 each coordinate Fe cation. AMP is bound by residues His-24, Asp-62, and 94–95 (NH). An AMP-binding site is contributed by His-200.

It belongs to the cyclic nucleotide phosphodiesterase class-III family. Fe(2+) is required as a cofactor.

The chain is Probable cyclic nucleotide phosphodiesterase PSM_A2567 from Pseudoalteromonas sp. (strain SM9913).